Here is a 990-residue protein sequence, read N- to C-terminus: Fibronectin-binding protein A (990 aa).

The N-terminal stretch at 1-35 (MKNNLRYGIRKHKLGAASVFLGTMIVVGMGQDKEA) is a signal peptide. The YSIRK-G/S signaling motif motif lies at 7 to 18 (YGIRKHKLGAAS). 2 disordered regions span residues 33–61 (KEAATSEQKTTTVEENGNSATDNKVSETQ) and 96–193 (PKAV…TEVK). Over residues 37-55 (TSEQKTTTVEENGNSATDN) the composition is skewed to polar residues. The segment at 37-511 (TSEQKTTTVE…SNKADGNGKN (475 aa)) is ligand-binding A region. Basic and acidic residues-rich tracts occupy residues 112-126 (TVKEEVVKEEEKPQV) and 179-193 (DVAEAKEASDVTEVK). Residues 194 to 511 (GTDVTSKVTV…SNKADGNGKN (318 aa)) are fibrinogen/elastin/tropoelastin-binding. The segment at 512–834 (GQIIQNNDFE…EGQQTIEEDT (323 aa)) is fibronectin-binding. One copy of the B-1 repeat lies at 545–574 (ENQDNTPLDIDYHTAIDGEGGYADGYIETI). A 2 X approximate tandem repeats region spans residues 545 to 604 (ENQDNTPLDIDYHTAIDGEGGYADGYIETIEETDSSAIDIDYHTAVDSEAGHVGGYTESS). The stretch at 575–604 (EETDSSAIDIDYHTAVDSEAGHVGGYTESS) is one B-2 repeat. Residues 702–969 (LGYEGGQNSG…EESTNKGMLF (268 aa)) are disordered. Residues 707-744 (GQNSGNQSFEEDTEEDKPKYEQGGNIVDIDFDSVPQIQ) form a D-1 repeat. The 4 X approximate tandem repeats stretch occupies residues 707 to 850 (GQNSGNQSFE…TPEVPSEPET (144 aa)). Over residues 741–752 (PQIQGQNNGNQS) the composition is skewed to polar residues. The D-2 repeat unit spans residues 745–782 (GQNNGNQSFEEDTEKDKPKYEQGGNIIDIDFDSVPQIH). The stretch at 783-821 (GFNKHNEIIEEDTNKDKPNYQFGGHNSVDFEEDTLPKVS) is one D-3 repeat. Basic and acidic residues predominate over residues 786 to 800 (KHNEIIEEDTNKDKP). A D-4; truncated repeat occupies 822 to 850 (GQNEGQQTIEEDTTPPTPPTPEVPSEPET). Positions 836 to 910 (PPTPPTPEVP…PAEPGKPVPP (75 aa)) are enriched in pro residues. 5 WR repeats span residues 851–864 (PTPPTPEVPSEPET), 865–878 (PTPPTPEVPSEPET), 879–892 (PTPPTPEVPSEPET), 893–906 (PTPPTPEVPAEPGK), and 907–920 (PVPPAEEEPKKPSK). The segment at 851-920 (PTPPTPEVPS…AEEEPKKPSK (70 aa)) is 5 X tandem repeats, Pro-rich (WR). The LPXTG sorting signal motif lies at 954–958 (LPETG). At Thr957 the chain carries Pentaglycyl murein peptidoglycan amidated threonine. A propeptide spans 958–990 (GGEESTNKGMLFGGLFSILGLALLRRNKKNHKA) (removed by sortase).

Its subcellular location is the secreted. It localises to the cell wall. In terms of biological role, promotes bacterial attachment to multiple substrates, such as fibronectin (Fn), fibrinogen (Fg), elastin peptides and tropoelastin. This confers to S.aureus the ability to invade endothelial cells. Promotes adherence to and aggregation of activated platelets. The polypeptide is Fibronectin-binding protein A (fnbA) (Staphylococcus aureus (strain bovine RF122 / ET3-1)).